A 78-amino-acid polypeptide reads, in one-letter code: HssA/B-like protein 29 (78 aa).

Residues 1–31 (MTLFSSITSISKTNTSSKSSLNSFSGSSLSM) form a disordered region.

This sequence belongs to the hssA/B family.

This is HssA/B-like protein 29 (hssl29) from Dictyostelium discoideum (Social amoeba).